A 680-amino-acid polypeptide reads, in one-letter code: Serine/threonine-protein kinase YPK1 (680 aa).

Residues 1 to 11 (MYSWKSKFKFG) show a composition bias toward basic residues. The disordered stretch occupies residues 1-117 (MYSWKSKFKF…GTPNDATSSS (117 aa)). Basic and acidic residues-rich tracts occupy residues 12–21 (KSKEEKEAKH) and 41–56 (GEHD…DRKG). A Phosphothreonine modification is found at T57. Positions 59–71 (NPSNSSVVPVRVS) are enriched in low complexity. S61, S64, and S71 each carry phosphoserine. Over residues 73-83 (DASSSTSTVRD) the composition is skewed to polar residues. The span at 84 to 97 (SNGGNSENTNSSQN) shows a compositional bias: low complexity. Residues 98–117 (LDETANIGSTGTPNDATSSS) show a composition bias toward polar residues. Phosphoserine is present on S170. One can recognise a Protein kinase domain in the interval 347–602 (FDLLKVIGKG…ADEIRNHPFF (256 aa)). ATP is bound by residues 353-361 (IGKGSFGKV) and K376. The active-site Proton acceptor is D470. T502 is modified (phosphothreonine). T504 carries the post-translational modification Phosphothreonine; by PKH1. An AGC-kinase C-terminal domain is found at 603 to 673 (SQLSWKRLLM…VGNEQLGSSM (71 aa)). S644 and S653 each carry phosphoserine. T662 carries the post-translational modification Phosphothreonine; by PKH1. S671 is subject to Phosphoserine.

The protein belongs to the protein kinase superfamily. AGC Ser/Thr protein kinase family. RAC subfamily. In terms of processing, autophosphorylated. Phytosphingosine level stimulates phosphorylation by PKH1. The N-terminal half is phosphorylated by FPK1. Phosphorylation is inhibited by exogenous addition of phytosphingosine.

It localises to the cytoplasm. Its subcellular location is the cell membrane. It catalyses the reaction L-seryl-[protein] + ATP = O-phospho-L-seryl-[protein] + ADP + H(+). The enzyme catalyses L-threonyl-[protein] + ATP = O-phospho-L-threonyl-[protein] + ADP + H(+). Its activity is regulated as follows. Activated by phytosphingosine (PHS), a sphingoid long chain base. Activated by PKH1 phosphorylation. Its function is as follows. Plays an essential role in the proliferation of yeast cells. Involved in a signaling pathway, required for optimal cell wall integrity, that acts in parallel with the PKC1-SLT2-dependent pathway. Downstream kinase in the sphingolipid-mediated signaling pathway. Phosphorylation is regulated by the intracellular sphingolipid concentration. Disruption or inhibition of sphingolipid synthesis leads to the activation and phosphorylation of YPK1 through the TORC2 and PKH1 pathways, which in turn phosphorylates ORM1 and LAG1 to activate sphingolipid synthesis. Cooperates with SLI1 in mediating resistance to the sphingolipid biosynthesis inhibitor drug myriocin (ISP-1); kinase activity is essential for the resistance. Required for both receptor-mediated and fluid-phase endocytosis, but is not necessary for receptor phosphorylation or ubiquitination. Necessary for the internalization of plasma membrane proteins carrying different types of internalization signals. Acts downstream of the PKH kinases to control endocytosis by phosphorylating components of the endocytic machinery. Phosphorylation of residue Thr-504 in the activation loop and residue Thr-662 are essential for activity. Phosphorylates and down-regulates flippase activator FPK1. This chain is Serine/threonine-protein kinase YPK1 (YPK1), found in Saccharomyces cerevisiae (strain ATCC 204508 / S288c) (Baker's yeast).